The sequence spans 432 residues: Sphingosine N-acyltransferase-like protein ALT7 (432 aa).

The chain crosses the membrane as a helical span at residues 55–75 (IGLSLGSLLLLILMFTCLPYY). Asparagine 77 is a glycosylation site (N-linked (GlcNAc...) asparagine). The next 7 membrane-spanning stretches (helical) occupy residues 91-111 (FIFS…IYLL), 128-148 (FTEQ…GMYI), 172-192 (GLTK…IVVV), 226-246 (VGNV…FAKL), 250-270 (LGFQ…WLVA), 273-293 (GLYL…MPYG), and 338-358 (AFLG…GMIL). In terms of domain architecture, TLC spans 123 to 366 (KLMVRFTEQG…ILKVAYKVFQ (244 aa)). A disordered region spans residues 370-395 (ADDTRSDSEESGYGTSDHEGDCYGAQ).

It belongs to the sphingosine N-acyltransferase family.

The protein resides in the membrane. It functions in the pathway mycotoxin biosynthesis. Its function is as follows. Sphingosine N-acyltransferase-like protein; part of the gene cluster that mediates the biosynthesis of the host-selective toxins (HSTs) AAL-toxins, sphinganine-analog mycotoxins responsible for Alternaria stem canker on tomato by the tomato pathotype. The biosynthesis starts with the polyketide synthase ALT1-catalyzed C-16 carbon chain assembly from one starter acetyl-CoA unit with malonyl-CoA extender units. ALT1 also selectively transfers methyl groups at the first and the third cycle of chain elongation for AAL toxin. The C-16 polyketide chain is released from the enzyme by a nucleophilic attack of a carbanion, which is derived from R-carbon of glycin by decarboxylation, on the carbonyl carbon of polyketide acyl chain. This step is probably catalyzed by a pyridoxal 5'-phosphate-dependent aminoacyl transferase ALT4. The respective functions of the other enzymes encoded by the cluster have still to be elucidated. The sphingosine N-acyltransferase-like protein ALT7 seems not to act as a resistance/self-tolerance factor against the toxin in the toxin biosynthetic gene cluster, contrary to what is expected. This Alternaria alternata (Alternaria rot fungus) protein is Sphingosine N-acyltransferase-like protein ALT7.